The primary structure comprises 89 residues: Small ribosomal subunit protein bS20 (89 aa).

Positions 1–11 (MANIKSQIKRN) are enriched in polar residues. The segment at 1 to 22 (MANIKSQIKRNLTNEKRRLRNK) is disordered.

It belongs to the bacterial ribosomal protein bS20 family.

Its function is as follows. Binds directly to 16S ribosomal RNA. This chain is Small ribosomal subunit protein bS20, found in Frankia casuarinae (strain DSM 45818 / CECT 9043 / HFP020203 / CcI3).